A 204-amino-acid chain; its full sequence is N-(5'-phosphoribosyl)anthranilate isomerase (204 aa).

Belongs to the TrpF family.

It carries out the reaction N-(5-phospho-beta-D-ribosyl)anthranilate = 1-(2-carboxyphenylamino)-1-deoxy-D-ribulose 5-phosphate. The protein operates within amino-acid biosynthesis; L-tryptophan biosynthesis; L-tryptophan from chorismate: step 3/5. The sequence is that of N-(5'-phosphoribosyl)anthranilate isomerase from Bacillus cereus (strain AH187).